The sequence spans 301 residues: uncharacterized protein (301 aa).

Positions 146, 148, and 177 each coordinate a divalent metal cation.

It belongs to the FAH family.

This is an uncharacterized protein from Staphylococcus epidermidis (strain ATCC 12228 / FDA PCI 1200).